A 1170-amino-acid polypeptide reads, in one-letter code: Short transient receptor potential channel 2 (1170 aa).

The Cytoplasmic portion of the chain corresponds to 1-627 (MLMSLTDSKE…GWRGSTTIWK (627 aa)). 3 disordered regions span residues 64–113 (SLSD…QTST), 142–231 (AHKA…QATG), and 322–342 (ESGS…VEES). Over residues 74-85 (SPGSSGLNQNSS) the composition is skewed to polar residues. Over residues 158-177 (GEPDSSHPERAEPRAEEPNR) the composition is skewed to basic and acidic residues. ANK repeat units lie at residues 300-329 (KFPP…DPSG), 346-376 (SWRE…DFRQ), 377-405 (IHEA…REKG), and 429-458 (PGVT…TIAR). Residues 628–648 (LFVAFLIFLTMPFLCIGYWLA) form a helical membrane-spanning segment. Residues 649–658 (PKSRLGRLLK) lie on the Extracellular side of the membrane. Residues 659-679 (IPVLKFLLHSASYLWFLIFLL) form a helical membrane-spanning segment. Residues 680–701 (GESLVMETQLSTFKGRSQSVWE) are Cytoplasmic-facing. A helical transmembrane segment spans residues 702–722 (TSLHMIWVTGFLWFECKEVWI). Residues 723–737 (EGLRSYLLDWWNFLD) are Extracellular-facing. Residues 738 to 758 (VVILSLYLASFALRLLLAGLA) traverse the membrane as a helical segment. Residues 759-788 (YMHCRDASDSSTCRYFTTAERSEWRTEDPQ) lie on the Cytoplasmic side of the membrane. Residues 789–809 (FLAEVLFAVTSMLSFTRLAYI) traverse the membrane as a helical segment. Residues 810 to 832 (LPAHESLGTLQISIGKMIDDMIR) lie on the Extracellular side of the membrane. Residues 833–853 (FMFILMIILTAFLCGLNNIYV) form a helical membrane-spanning segment. Topologically, residues 854–898 (PYQETEKLGNFNETFQFLFWTMFGMEEHSVVDMPQFLVPEFVGRA) are cytoplasmic. Residues 899 to 919 (MYGIFTIVMVIVLLNMLIAMI) form a helical membrane-spanning segment. At 920 to 1170 (TNSFQKIEDD…GEDLETKGES (251 aa)) the chain is on the extracellular side. A coiled-coil region spans residues 1030–1068 (RREFEETRRKDLGNRLTELTKTVSRLQSEVASVQKTVAA). The disordered stretch occupies residues 1118-1170 (LEDSLDATGEAGTPASGESSSSSSAHVLVHREQEAEGAGDLPLGEDLETKGES).

It belongs to the transient receptor (TC 1.A.4) family. STrpC subfamily. TRPC2 sub-subfamily. Expressed exclusively in vomeronasal organ neurons (sensory microvilli).

It localises to the membrane. In terms of biological role, thought to form a receptor-activated calcium permeant cation channel. Probably is operated by a phosphatidylinositol second messenger system activated by receptor tyrosine kinases or G-protein coupled receptors. Is not activated by intracellular calcium store depletion. The polypeptide is Short transient receptor potential channel 2 (Trpc2) (Rattus norvegicus (Rat)).